The primary structure comprises 182 residues: ATP synthase subunit delta (182 aa).

It belongs to the ATPase delta chain family. In terms of assembly, F-type ATPases have 2 components, F(1) - the catalytic core - and F(0) - the membrane proton channel. F(1) has five subunits: alpha(3), beta(3), gamma(1), delta(1), epsilon(1). F(0) has three main subunits: a(1), b(2) and c(10-14). The alpha and beta chains form an alternating ring which encloses part of the gamma chain. F(1) is attached to F(0) by a central stalk formed by the gamma and epsilon chains, while a peripheral stalk is formed by the delta and b chains.

It is found in the cell inner membrane. Its function is as follows. F(1)F(0) ATP synthase produces ATP from ADP in the presence of a proton or sodium gradient. F-type ATPases consist of two structural domains, F(1) containing the extramembraneous catalytic core and F(0) containing the membrane proton channel, linked together by a central stalk and a peripheral stalk. During catalysis, ATP synthesis in the catalytic domain of F(1) is coupled via a rotary mechanism of the central stalk subunits to proton translocation. Functionally, this protein is part of the stalk that links CF(0) to CF(1). It either transmits conformational changes from CF(0) to CF(1) or is implicated in proton conduction. The polypeptide is ATP synthase subunit delta (Pseudothermotoga lettingae (strain ATCC BAA-301 / DSM 14385 / NBRC 107922 / TMO) (Thermotoga lettingae)).